The chain runs to 229 residues: Cytidylate kinase (229 aa).

12–20 lines the ATP pocket; sequence GPSGSGKGT.

This sequence belongs to the cytidylate kinase family. Type 1 subfamily.

It localises to the cytoplasm. The catalysed reaction is CMP + ATP = CDP + ADP. It catalyses the reaction dCMP + ATP = dCDP + ADP. This is Cytidylate kinase from Pseudomonas fluorescens (strain Pf0-1).